Reading from the N-terminus, the 219-residue chain is Imidazole glycerol phosphate synthase subunit HisH (219 aa).

The region spanning 4–216 (TVTVLDYGSG…VDSLPATGRN (213 aa)) is the Glutamine amidotransferase type-1 domain. Cys-82 serves as the catalytic Nucleophile. Active-site residues include His-191 and Glu-193.

In terms of assembly, heterodimer of HisH and HisF.

It localises to the cytoplasm. It carries out the reaction 5-[(5-phospho-1-deoxy-D-ribulos-1-ylimino)methylamino]-1-(5-phospho-beta-D-ribosyl)imidazole-4-carboxamide + L-glutamine = D-erythro-1-(imidazol-4-yl)glycerol 3-phosphate + 5-amino-1-(5-phospho-beta-D-ribosyl)imidazole-4-carboxamide + L-glutamate + H(+). The catalysed reaction is L-glutamine + H2O = L-glutamate + NH4(+). Its pathway is amino-acid biosynthesis; L-histidine biosynthesis; L-histidine from 5-phospho-alpha-D-ribose 1-diphosphate: step 5/9. Its function is as follows. IGPS catalyzes the conversion of PRFAR and glutamine to IGP, AICAR and glutamate. The HisH subunit catalyzes the hydrolysis of glutamine to glutamate and ammonia as part of the synthesis of IGP and AICAR. The resulting ammonia molecule is channeled to the active site of HisF. The protein is Imidazole glycerol phosphate synthase subunit HisH of Renibacterium salmoninarum (strain ATCC 33209 / DSM 20767 / JCM 11484 / NBRC 15589 / NCIMB 2235).